The chain runs to 607 residues: Kelch repeat and BTB domain-containing protein 3 (607 aa).

Positions 48–115 (YDFKIIMKEE…AYTGKTRITD (68 aa)) constitute a BTB domain. The 101-residue stretch at 150-250 (CLHLLSLSDS…QLSEDTLQDY (101 aa)) folds into the BACK domain. 5 Kelch repeats span residues 291 to 337 (KYIF…SSYG), 339 to 390 (KIFL…TPRT), 400 to 450 (RLFV…ACQN), 452 to 502 (IYVL…KAVP), and 548 to 595 (KIYI…VIQF).

In Mus musculus (Mouse), this protein is Kelch repeat and BTB domain-containing protein 3.